We begin with the raw amino-acid sequence, 92 residues long: Signal recognition particle 19 kDa protein (92 aa).

The protein belongs to the SRP19 family. Part of the signal recognition particle protein translocation system, which is composed of SRP and FtsY. Archaeal SRP consists of a 7S RNA molecule of 300 nucleotides and two protein subunits: SRP54 and SRP19.

It is found in the cytoplasm. In terms of biological role, involved in targeting and insertion of nascent membrane proteins into the cytoplasmic membrane. Binds directly to 7S RNA and mediates binding of the 54 kDa subunit of the SRP. This Haloferax volcanii (strain ATCC 29605 / DSM 3757 / JCM 8879 / NBRC 14742 / NCIMB 2012 / VKM B-1768 / DS2) (Halobacterium volcanii) protein is Signal recognition particle 19 kDa protein.